A 392-amino-acid polypeptide reads, in one-letter code: Selenide, water dikinase 1 (392 aa).

The active site involves C31. ATP-binding positions include K32, 67 to 69, D87, D110, and 161 to 164; these read GMD and GGQT. D69 is a binding site for Mg(2+). Residue D110 coordinates Mg(2+). D265 contacts Mg(2+).

This sequence belongs to the selenophosphate synthase 1 family. Class II subfamily. Homodimer. Mg(2+) is required as a cofactor.

Its subcellular location is the cell membrane. The protein resides in the nucleus membrane. It catalyses the reaction hydrogenselenide + ATP + H2O = selenophosphate + AMP + phosphate + 2 H(+). In terms of biological role, synthesizes selenophosphate from selenide and ATP. The chain is Selenide, water dikinase 1 (sephs1) from Xenopus laevis (African clawed frog).